We begin with the raw amino-acid sequence, 44 residues long: Thymosin beta-10 (44 aa).

It belongs to the thymosin beta family.

The protein localises to the cytoplasm. It localises to the cytoskeleton. Functionally, plays an important role in the organization of the cytoskeleton. Binds to and sequesters actin monomers (G actin) and therefore inhibits actin polymerization. The chain is Thymosin beta-10 from Torpedo marmorata (Marbled electric ray).